The sequence spans 320 residues: Serpentine receptor class delta-40 (320 aa).

Transmembrane regions (helical) follow at residues 12–32, 42–62, 95–115, 133–153, 189–209, 243–263, and 273–293; these read IFYPIFFIFSTITQLMLIYLI, MLKVFLLNTSLFQIILVVVSC, YQVLQTSAFMSGMSILITFVF, IILLFHMPIIASMVMEVIMVI, LINFLLISGSVVASPFISFFF, AFLPLIFYVPVFGLYFYCILT, and FMTVVPCLPAFFDPMLTLYFV.

It belongs to the nematode receptor-like protein srd family.

It is found in the membrane. The sequence is that of Serpentine receptor class delta-40 (srd-40) from Caenorhabditis elegans.